Consider the following 187-residue polypeptide: Putative manganese efflux pump MntP (187 aa).

Transmembrane regions (helical) follow at residues 3-23 (LSAT…ASIG), 41-61 (LIFG…GLLA), 62-82 (TQFV…FLGG), 106-128 (LLVT…LAFL), 142-162 (ATLI…PLLG), and 167-187 (ILGG…HFAG).

Belongs to the MntP (TC 9.B.29) family.

It localises to the cell inner membrane. Probably functions as a manganese efflux pump. This Cronobacter sakazakii (strain ATCC BAA-894) (Enterobacter sakazakii) protein is Putative manganese efflux pump MntP.